The chain runs to 807 residues: Microbial collagenase (807 aa).

A signal peptide spans 1–27 (MSHLLPFPRRRLALACLLASISGASFG). His434 lines the Zn(2+) pocket. The active site involves Glu435. Zn(2+) is bound at residue His438. The tract at residues 562 to 585 (EVTPENPDTDPDTPTEPSDGVTQL) is disordered.

This sequence belongs to the peptidase M9A family. Requires Zn(2+) as cofactor.

The protein resides in the secreted. It carries out the reaction Digestion of native collagen in the triple helical region at Xaa-|-Gly bonds. With synthetic peptides, a preference is shown for Gly at P3 and P1', Pro and Ala at P2 and P2', and hydroxyproline, Ala or Arg at P3'.. Possesses gelatinolytic activity. The polypeptide is Microbial collagenase (Vibrio vulnificus (strain CMCP6)).